The sequence spans 313 residues: Biotin synthase (313 aa).

Positions 28–258 (NFGNDIELCS…LFPQARLRLS (231 aa)) constitute a Radical SAM core domain. Residues C46, C50, and C53 each coordinate [4Fe-4S] cluster. C90, C121, C181, and R256 together coordinate [2Fe-2S] cluster.

The protein belongs to the radical SAM superfamily. Biotin synthase family. Homodimer. [4Fe-4S] cluster serves as cofactor. Requires [2Fe-2S] cluster as cofactor.

The enzyme catalyses (4R,5S)-dethiobiotin + (sulfur carrier)-SH + 2 reduced [2Fe-2S]-[ferredoxin] + 2 S-adenosyl-L-methionine = (sulfur carrier)-H + biotin + 2 5'-deoxyadenosine + 2 L-methionine + 2 oxidized [2Fe-2S]-[ferredoxin]. It functions in the pathway cofactor biosynthesis; biotin biosynthesis; biotin from 7,8-diaminononanoate: step 2/2. Catalyzes the conversion of dethiobiotin (DTB) to biotin by the insertion of a sulfur atom into dethiobiotin via a radical-based mechanism. The chain is Biotin synthase from Francisella philomiragia subsp. philomiragia (strain ATCC 25017 / CCUG 19701 / FSC 153 / O#319-036).